A 506-amino-acid polypeptide reads, in one-letter code: Sodium-coupled neutral amino acid symporter 2 (506 aa).

The tract at residues 1 to 23 is disordered; sequence MKKAEMGRFSISPDEDSSSYSSN. Over 1–76 the chain is Cytoplasmic; sequence MKKAEMGRFS…HPGTTSFGMS (76 aa). The segment at 1–96 is regulates protein turnover upon amino acid deprivation; it reads MKKAEMGRFS…SGILGLSYAM (96 aa). Phosphoserine is present on residues S10, S12, S21, S22, and S55. The helical transmembrane segment at 77 to 96 threads the bilayer; that stretch reads VFNLSNAIVGSGILGLSYAM. Residue N82 coordinates Na(+). At 97–102 the chain is on the extracellular side; that stretch reads ANTGIA. Residues 103 to 123 traverse the membrane as a helical segment; it reads LFIILLTFVSIFSLYSVHLLL. The Cytoplasmic segment spans residues 124 to 158; it reads KTANEGGSLLYEQLGYKAFGLVGKLAASGSITMQN. The helical transmembrane segment at 159–177 threads the bilayer; sequence IGAMSSYLFIVKYELPLVI. Topologically, residues 178 to 188 are extracellular; sequence QALTNIEDKTG. A helical membrane pass occupies residues 189–209; it reads LWYLNGNYLVLLVSLVVILPL. Residues 210 to 217 are Cytoplasmic-facing; the sequence is SLFRNLGY. The chain crosses the membrane as a helical span at residues 218–238; the sequence is LGYTSGLSLLCMVFFLIVVIC. Residues 239–292 lie on the Extracellular side of the membrane; the sequence is KKFQVPCPVEAALIINETINTTLTQPTALVPALSHNVTENDSCRPHYFIFNSQT. An intrachain disulfide couples C245 to C281. N-linked (GlcNAc...) asparagine glycans are attached at residues N258 and N274. Residues 293–313 traverse the membrane as a helical segment; that stretch reads VYAVPILIFSFVCHPAVLPIY. The Cytoplasmic portion of the chain corresponds to 314-329; that stretch reads EELKDRSRRRMMNVSK. Residues 330–350 form a helical membrane-spanning segment; sequence ISFFAMFLMYLLAALFGYLTF. Residues 351–371 lie on the Extracellular side of the membrane; sequence YEHVESELLHTYSSILGTDIL. The helical transmembrane segment at 372–392 threads the bilayer; that stretch reads LLIVRLAVLMAVTLTVPVVIF. T386 serves as a coordination point for Na(+). Residues 393–413 are Cytoplasmic-facing; it reads PIRSSVTHLLCASKDFSWWRH. Residues 414 to 434 traverse the membrane as a helical segment; the sequence is SLITVSILAFTNLLVIFVPTI. At 435-436 the chain is on the extracellular side; sequence RD. A helical transmembrane segment spans residues 437-457; the sequence is IFGFIGASAASMLIFILPSAF. The Cytoplasmic segment spans residues 458–472; that stretch reads YIKLVKKEPMKSVQK. The chain crosses the membrane as a helical span at residues 473-495; the sequence is IGALFFLLSGVLVMTGSMALIVL. Residues 496–506 lie on the Extracellular side of the membrane; sequence DWVHNAPGGGH.

It belongs to the amino acid/polyamine transporter 2 family. Polyubiquitination by NEDD4L regulates the degradation and the activity of SLC38A2. As to expression, ubiquitously expressed. Expressed in neocortex. Widely expressed in the central nervous system with higher concentrations in caudal regions. Expressed by glutamatergic and GABAergic neurons together with astrocytes and other non-neuronal cells in the cerebral cortex (at protein level).

The protein localises to the cell membrane. The catalysed reaction is L-alanine(in) + Na(+)(in) = L-alanine(out) + Na(+)(out). The enzyme catalyses glycine(in) + Na(+)(in) = glycine(out) + Na(+)(out). It carries out the reaction L-serine(in) + Na(+)(in) = L-serine(out) + Na(+)(out). It catalyses the reaction L-proline(in) + Na(+)(in) = L-proline(out) + Na(+)(out). The catalysed reaction is L-methionine(in) + Na(+)(in) = L-methionine(out) + Na(+)(out). The enzyme catalyses L-histidine(in) + Na(+)(in) = L-histidine(out) + Na(+)(out). It carries out the reaction L-asparagine(in) + Na(+)(in) = L-asparagine(out) + Na(+)(out). It catalyses the reaction L-glutamine(in) + Na(+)(in) = L-glutamine(out) + Na(+)(out). The catalysed reaction is L-threonine(in) + Na(+)(in) = L-threonine(out) + Na(+)(out). The enzyme catalyses L-leucine(in) + Na(+)(in) = L-leucine(out) + Na(+)(out). It carries out the reaction L-phenylalanine(in) + Na(+)(in) = L-phenylalanine(out) + Na(+)(out). With respect to regulation, inhibited by N-methyl-D-glucamine. Inhibited by choline. Allosteric regulation of sodium ions binding by pH. Functionally, symporter that cotransports neutral amino acids and sodium ions from the extracellular to the intracellular side of the cell membrane. The transport is pH-sensitive, Li(+)-intolerant, electrogenic, driven by the Na(+) electrochemical gradient and cotransports of neutral amino acids and sodium ions with a stoichiometry of 1:1. May function in the transport of amino acids at the blood-brain barrier. May function in the transport of amino acids in the supply of maternal nutrients to the fetus through the placenta. Maintains a key metabolic glutamine/glutamate balance underpinning retrograde signaling by dendritic release of the neurotransmitter glutamate. Transports L-proline in differentiating osteoblasts for the efficient synthesis of proline-enriched proteins and provides proline essential for osteoblast differentiation and bone formation during bone development. This Homo sapiens (Human) protein is Sodium-coupled neutral amino acid symporter 2.